The sequence spans 273 residues: 2,3,4,5-tetrahydropyridine-2,6-dicarboxylate N-succinyltransferase (273 aa).

2 residues coordinate substrate: arginine 106 and aspartate 143.

It belongs to the transferase hexapeptide repeat family. Homotrimer.

The protein resides in the cytoplasm. It carries out the reaction (S)-2,3,4,5-tetrahydrodipicolinate + succinyl-CoA + H2O = (S)-2-succinylamino-6-oxoheptanedioate + CoA. It functions in the pathway amino-acid biosynthesis; L-lysine biosynthesis via DAP pathway; LL-2,6-diaminopimelate from (S)-tetrahydrodipicolinate (succinylase route): step 1/3. This is 2,3,4,5-tetrahydropyridine-2,6-dicarboxylate N-succinyltransferase from Wolbachia sp. subsp. Brugia malayi (strain TRS).